We begin with the raw amino-acid sequence, 268 residues long: MKNKNTDPMQGHRARKRFGQNFLEDQGIINAIVRSIGPKASDNLVEIGPGKGAITAQLIESCPSMQVVELDRDLIPILLAQFAIYNDFRIHQTDALKFDFGQLATPERPLRVVGNLPYNISTPLIFHLLSFGELIADMHFMLQKEVVLRLAAGPGDKNYGRLSVMTQYVCQVENLFEVPPECFNPRPKVDSAIVRLTPYRTQPFVAAHPDKLAKLVKTAFAQRRKTLRNNLKNLDEELDLEALDIDLTRRAESLSLEEYVNLSNTLWP.

Positions 21, 23, 48, 69, 94, and 115 each coordinate S-adenosyl-L-methionine.

Belongs to the class I-like SAM-binding methyltransferase superfamily. rRNA adenine N(6)-methyltransferase family. RsmA subfamily.

The protein resides in the cytoplasm. It carries out the reaction adenosine(1518)/adenosine(1519) in 16S rRNA + 4 S-adenosyl-L-methionine = N(6)-dimethyladenosine(1518)/N(6)-dimethyladenosine(1519) in 16S rRNA + 4 S-adenosyl-L-homocysteine + 4 H(+). Its function is as follows. Specifically dimethylates two adjacent adenosines (A1518 and A1519) in the loop of a conserved hairpin near the 3'-end of 16S rRNA in the 30S particle. May play a critical role in biogenesis of 30S subunits. In Saccharophagus degradans (strain 2-40 / ATCC 43961 / DSM 17024), this protein is Ribosomal RNA small subunit methyltransferase A.